A 140-amino-acid chain; its full sequence is Small ribosomal subunit protein uS19 (140 aa).

Belongs to the universal ribosomal protein uS19 family.

Protein S19 forms a complex with S13 that binds strongly to the 16S ribosomal RNA. This is Small ribosomal subunit protein uS19 (rps19) from Sulfurisphaera tokodaii (strain DSM 16993 / JCM 10545 / NBRC 100140 / 7) (Sulfolobus tokodaii).